Consider the following 184-residue polypeptide: Ras-related protein RabN2 (184 aa).

3 to 10 is a binding site for GTP; it reads GDYRSGKT. Positions 25 to 32 match the Effector region motif; that stretch reads TNPSTFDY. Residues 50 to 54 and 117 to 120 each bind GTP; these read DTAGH and TKSD.

This sequence belongs to the small GTPase superfamily. Rab family.

This Dictyostelium discoideum (Social amoeba) protein is Ras-related protein RabN2 (rabN2).